Here is a 100-residue protein sequence, read N- to C-terminus: Urease subunit gamma (100 aa).

It belongs to the urease gamma subunit family. Heterotrimer of UreA (gamma), UreB (beta) and UreC (alpha) subunits. Three heterotrimers associate to form the active enzyme.

It localises to the cytoplasm. It catalyses the reaction urea + 2 H2O + H(+) = hydrogencarbonate + 2 NH4(+). It functions in the pathway nitrogen metabolism; urea degradation; CO(2) and NH(3) from urea (urease route): step 1/1. In Actinobacillus pleuropneumoniae (Haemophilus pleuropneumoniae), this protein is Urease subunit gamma.